Here is a 176-residue protein sequence, read N- to C-terminus: 3-hydroxyanthranilate 3,4-dioxygenase (176 aa).

R44 provides a ligand contact to O2. H48, E54, and H92 together coordinate Fe cation. Substrate is bound at residue E54. Substrate-binding residues include R96 and E106. Residues C121, C124, C158, and C161 each coordinate Fe cation.

Belongs to the 3-HAO family. Homodimer. Fe(2+) is required as a cofactor.

The enzyme catalyses 3-hydroxyanthranilate + O2 = (2Z,4Z)-2-amino-3-carboxymuconate 6-semialdehyde. It functions in the pathway cofactor biosynthesis; NAD(+) biosynthesis; quinolinate from L-kynurenine: step 3/3. Functionally, catalyzes the oxidative ring opening of 3-hydroxyanthranilate to 2-amino-3-carboxymuconate semialdehyde, which spontaneously cyclizes to quinolinate. The polypeptide is 3-hydroxyanthranilate 3,4-dioxygenase (Xanthomonas oryzae pv. oryzae (strain MAFF 311018)).